Consider the following 62-residue polypeptide: Metallothionein-4 (62 aa).

A divalent metal cation contacts are provided by C6, C8, C14, C16, C20, C22, C25, C27, C30, C34, C35, C37, C38, C42, C45, C49, C51, C58, C60, and C61.

Belongs to the metallothionein superfamily. Type 1 family.

Functionally, seems to bind zinc and copper. Could play a special role in regulating zinc metabolism during the differentiation of stratified epithelia. The protein is Metallothionein-4 (MT4) of Canis lupus familiaris (Dog).